A 307-amino-acid chain; its full sequence is Elongation factor Ts (307 aa).

The tract at residues 79-82 is involved in Mg(2+) ion dislocation from EF-Tu; it reads TDFV.

It belongs to the EF-Ts family.

It is found in the cytoplasm. Associates with the EF-Tu.GDP complex and induces the exchange of GDP to GTP. It remains bound to the aminoacyl-tRNA.EF-Tu.GTP complex up to the GTP hydrolysis stage on the ribosome. This Bartonella tribocorum (strain CIP 105476 / IBS 506) protein is Elongation factor Ts.